Consider the following 1135-residue polypeptide: MRILKLLELVVKVSLFTIALSSVLLAFLIFRATDAKVEIIRGDHPEVYDDSAENEVPTAASIQRKAILETLTNLMLESQTPGTRQIREEESTIPIFAESTTQKIISVSDLPNNCLNASSLKCEIKGISTYNVYYQVENNDVIYSCVSDSAEGLEKCDNSLNLPKRFSKVPVIPITKLDNKRHFSVGTKFFISESLTQDNYPITYNSYPTNGTVSLQTVKLSGDCKITKSNFANPYTVSITSPEKIMGYLIKKPGENVEHKVISFSGSASITFTEEMLDGEHNLLCGDKSAKIPKTNKRVRDCIIKYSKSIYKQTACINFSWIRLILIALLIYFPIRWLVNKTTKPLFLWYDLIGLITYPILLLINCLWKYFPFKCSNRGNLCIITHKCTKLCICNKSKASKEHSLECPILSKETDHGYNKHKWTSMEWFHLIVNTKLSFSLLKFVTEILIGLIILSQMPMSMAQTTQCLSGCFYVPGCPFLVTSKFEKCPERDQCYCNVKEDKIIESIFGTNIIIEGPNDCIENQNCAANPSIDNLIKCRLGCEYLDLFRNKPLYNGFSDYTGSSLGLTSIGLYEAKRLRNGIIDSYNRTDKISGMIAGDSLNKNETSIPENILPRQSLIFDSVVDGKYRYMIEQSLLGGGGTIFMLNDKTSETAKKFVIYIKSVGIHYEVSEKYTTAPIQSTHTDFYSTCTGNCDTCRKNQALTGFQDFCITPTSYWGCEEAWCFAINEGATCGFCRNIYDMDKSYRIYSVLKSTIVADVCISGILGGQCSRITEEVPYENALFQADIQADLHNDGITIGELIAHGPDSHIYSGNIANLNDPVKMFGHPQLTRDGVPIFTKKTLEGDDMSWDCAAIGKKSITIKTCGYDTYRFRSGLEQISDIPVSFKDFSSFFLEKAFSLGKLKIVVDLPSDLFKVAPKKPSITSTSLNCNGCLLCGQGLSCILEFFSDLTFSTAISIDACSLSTYQLAVKKGSNKYNITMFCSANPDKKKMTLYPEGNPDISVEVLVNNVIVEEPENIIDQNDEYAHEEQQYNSDSSAWGFWDYIKSPFNFIASYFGSFFDTIRVILLIAFIFLVIYFCSILTTICKGYVKNESYKSRSKIEDDDDSEIKAPMLMKDTMTRRRPPMDFSHLV.

The N-terminal stretch at 1-35 (MRILKLLELVVKVSLFTIALSSVLLAFLIFRATDA) is a signal peptide. The Lumenal portion of the chain corresponds to 36 to 314 (KVEIIRGDHP…KYSKSIYKQT (279 aa)). A Cell attachment site motif is present at residues 41–43 (RGD). Disulfide bonds link cysteine 114-cysteine 145 and cysteine 122-cysteine 156. N-linked (GlcNAc...) asparagine; by host glycosylation is present at asparagine 116. Positions 177–195 (LDNKRHFSVGTKFFISESL) are non-covalent dimerization. Asparagine 210 carries N-linked (GlcNAc...) asparagine; by host glycosylation. Cysteine 224 and cysteine 285 are joined by a disulfide. Residues 315-366 (ACINFSWIRLILIALLIYFPIRWLVNKTTKPLFLWYDLIGLITYPILLLINC) form a helical membrane-spanning segment. The Cytoplasmic portion of the chain corresponds to 367-484 (LWKYFPFKCS…VPGCPFLVTS (118 aa)). The tract at residues 437–484 (LSFSLLKFVTEILIGLIILSQMPMSMAQTTQCLSGCFYVPGCPFLVTS) is signal for signal peptide peptidase. Over 485–1067 (KFEKCPERDQ…YFGSFFDTIR (583 aa)) the chain is Lumenal. Residues asparagine 588, asparagine 605, and asparagine 980 are each glycosylated (N-linked (GlcNAc...) asparagine; by host). Residues 1068-1088 (VILLIAFIFLVIYFCSILTTI) traverse the membrane as a helical segment. The Cytoplasmic portion of the chain corresponds to 1089-1135 (CKGYVKNESYKSRSKIEDDDDSEIKAPMLMKDTMTRRRPPMDFSHLV).

This sequence belongs to the tospovirus envelope glycoprotein family. As to quaternary structure, homodimer; disulfide-linked. Heterodimer with Glycoprotein C. Interacts with nucleoprotein. Heterodimer with Glycoprotein N. Interacts with nucleoprotein. Post-translationally, specific enzymatic cleavages in vivo yield mature proteins including Glycoprotein N and Glycoprotein C. Glycosylated with O-linked glycans. Glycosylation is essential for proper subcellular location. In terms of processing, cleaved at acidic pH.

The protein resides in the virion membrane. It is found in the host Golgi apparatus membrane. Its subcellular location is the host endoplasmic reticulum membrane. In terms of biological role, forms the spikes present at the surface of the virion together with Glycoprotein C. They are able to attach the virion to a cell receptor and to promote fusion of membranes after endocytosis of the virion. Plays a role in virus binding and/or entry into the vector midgut. Functionally, forms the spikes present at the surface of the virion together with Glycoprotein N. They are able to attach the virion to a cell receptor and to promote fusion of membranes after endocytosis of the virion. Probable class II fusion protein. The chain is Envelopment polyprotein (GP) from Tomato spotted wilt virus (strain Regular2A) (TSWV).